The chain runs to 194 residues: Peptidyl-tRNA hydrolase (194 aa).

Tyr17 contacts tRNA. Catalysis depends on His22, which acts as the Proton acceptor. Tyr68, Asn70, and Asn116 together coordinate tRNA.

The protein belongs to the PTH family. Monomer.

Its subcellular location is the cytoplasm. It carries out the reaction an N-acyl-L-alpha-aminoacyl-tRNA + H2O = an N-acyl-L-amino acid + a tRNA + H(+). In terms of biological role, hydrolyzes ribosome-free peptidyl-tRNAs (with 1 or more amino acids incorporated), which drop off the ribosome during protein synthesis, or as a result of ribosome stalling. Its function is as follows. Catalyzes the release of premature peptidyl moieties from peptidyl-tRNA molecules trapped in stalled 50S ribosomal subunits, and thus maintains levels of free tRNAs and 50S ribosomes. This chain is Peptidyl-tRNA hydrolase, found in Pseudomonas savastanoi pv. phaseolicola (strain 1448A / Race 6) (Pseudomonas syringae pv. phaseolicola (strain 1448A / Race 6)).